We begin with the raw amino-acid sequence, 300 residues long: Lipoyl synthase 2 (300 aa).

The [4Fe-4S] cluster site is built by Cys-46, Cys-51, Cys-57, Cys-72, Cys-76, Cys-79, and Ser-294. Positions Tyr-58–Ser-283 constitute a Radical SAM core domain.

Belongs to the radical SAM superfamily. Lipoyl synthase family. [4Fe-4S] cluster is required as a cofactor.

The protein localises to the cytoplasm. It carries out the reaction [[Fe-S] cluster scaffold protein carrying a second [4Fe-4S](2+) cluster] + N(6)-octanoyl-L-lysyl-[protein] + 2 oxidized [2Fe-2S]-[ferredoxin] + 2 S-adenosyl-L-methionine + 4 H(+) = [[Fe-S] cluster scaffold protein] + N(6)-[(R)-dihydrolipoyl]-L-lysyl-[protein] + 4 Fe(3+) + 2 hydrogen sulfide + 2 5'-deoxyadenosine + 2 L-methionine + 2 reduced [2Fe-2S]-[ferredoxin]. Its pathway is protein modification; protein lipoylation via endogenous pathway; protein N(6)-(lipoyl)lysine from octanoyl-[acyl-carrier-protein]: step 2/2. Catalyzes the radical-mediated insertion of two sulfur atoms into the C-6 and C-8 positions of the octanoyl moiety bound to the lipoyl domains of lipoate-dependent enzymes, thereby converting the octanoylated domains into lipoylated derivatives. The chain is Lipoyl synthase 2 from Nostoc sp. (strain PCC 7120 / SAG 25.82 / UTEX 2576).